The sequence spans 964 residues: MLEEPECGAPGARGEAAAMDCKDRPAFPVKKLIQARLPFKRLNLVPKEKIDDGLDDTGGSRAGPVQTQLHNLETSLDHLENCHMGSDIDFRPKLVNGKGPLDNFLRSQVETSIGQAVVIIDLTEDSSNPPDNMVGHNKLNSAASSAQKNINGVPDKAGDDRGLPKARQKDELASPEEALSEVPCKTEAGGADSGGADRRGLTQRGSPQNCPKLTGDLSMWSEKDRDGWSEAGGILFKGKMPVVVLQDILALRPPARSPPATPPSQAVPSESETPESSPEEDLALSHSSLSSSSPTSSPEGQSVPTKLHTGPSPFPASTPVCRITKKLVRGSAEKNKMKLQRDKERLRRQLKLRAEKEEKEKLREEAKRAKEEARKKREEEKELKEKERREKREKDEKEKAEKQRLKEERRKERQEALEAKLEEKRKKEEEKRLREEEKRIKAEKAEITRFFQKPKTPQAPKTLAGSCGKFAPFEIKEHMVLAPRCRTAFDQDLCDQLDQLLQQQSSEFSFLQDLKSRRPLRSGPTVVSNRNTDLSNSDVVIVESSKVDGVPERRKFGRMKLLQFSENHRPAYWGTWNKKTTVIRPRDPWAQDRDLLDYEVDSDEEWEEEEPGESLSHSEGDDDDDVGEDEDEDDGFFVPHGYLSEDEGVTEECADPENHKVRQKLKAKEWDEFLAKGKRFRILQPVKIGCIWAADKDGGADLKVLQQFTACLLETVPPEEEQTPKASKREKRDQQILAQLLPLLHGNVNGSKVIIREFQECCRRGLLSRDAGSPEDSAASPPSPGPARPQTPTASEDVAVPSKARLKRIISENSVYEKRPDFRMCWYVHPQVLKSFAQEHLPVPCQWSYVTAVPSATREDSGSVPAPGPGQGMPVSLKRKSAGSMCITQFMKKRRHDGQVGTGDLDDFQADTEEEDDDEGDCVIMDISDVGDIQAPCGTTSGAGGSVGMDTSESFVSPSSLRLS.

The interval 1–49 (MLEEPECGAPGARGEAAAMDCKDRPAFPVKKLIQARLPFKRLNLVPKEK) is binds to PCNA. The interval 1–316 (MLEEPECGAP…LHTGPSPFPA (316 aa)) is binds to CBX1 chromo shadow domain. Residues S126, S141, and S144 each carry the phosphoserine modification. A disordered region spans residues 146-232 (AQKNINGVPD…KDRDGWSEAG (87 aa)). Residues 156–172 (KAGDDRGLPKARQKDEL) show a composition bias toward basic and acidic residues. Residue K185 forms a Glycyl lysine isopeptide (Lys-Gly) (interchain with G-Cter in SUMO1); alternate linkage. Residue K185 forms a Glycyl lysine isopeptide (Lys-Gly) (interchain with G-Cter in SUMO2); alternate linkage. The PxVxL motif signature appears at 236 to 249 (FKGKMPVVVLQDIL). 2 disordered regions span residues 253-437 (PPAR…REEE) and 601-641 (DSDE…VPHG). The span at 284–298 (LSHSSLSSSSPTSSP) shows a compositional bias: low complexity. The residue at position 312 (S312) is a Phosphoserine. Positions 329–453 (RGSAEKNKMK…KAEITRFFQK (125 aa)) form a coiled coil. The span at 331–437 (SAEKNKMKLQ…EEEKRLREEE (107 aa)) shows a compositional bias: basic and acidic residues. Acidic residues-rich tracts occupy residues 601 to 612 (DSDEEWEEEEPG) and 620 to 635 (GDDD…EDDG). The tract at residues 644 to 680 (SEDEGVTEECADPENHKVRQKLKAKEWDEFLAKGKRF) is necessary for homodimerization and competence for chromatin assembly. The binds to p60 stretch occupies residues 662 to 964 (RQKLKAKEWD…FVSPSSLRLS (303 aa)). T723 carries the post-translational modification Phosphothreonine. Residues 769–799 (RDAGSPEDSAASPPSPGPARPQTPTASEDVA) are disordered. The segment covering 770–780 (DAGSPEDSAAS) has biased composition (low complexity). Phosphoserine occurs at positions 773, 783, 811, 876, and 881. Residues 859–878 (EDSGSVPAPGPGQGMPVSLK) form a disordered region. Disordered regions lie at residues 897–920 (DGQV…DDEG) and 933–964 (IQAP…LRLS). A compositionally biased stretch (acidic residues) spans 904-920 (DLDDFQADTEEEDDDEG). A compositionally biased stretch (polar residues) spans 949–964 (MDTSESFVSPSSLRLS). S959 is modified (phosphoserine).

Belongs to the CHAF1A family. As to quaternary structure, homodimer. Part of the CAF-1 complex that contains RBBP4, CHAF1B and CHAF1A. CHAF1A binds directly to CHAF1B. Only minor amounts of RBBP4 are complexed with CHAF1A and CHAF1B in G1 phase. Interacts with PCNA; the interaction is direct. Interacts (via the PxVxL motif) with CBX5; the interaction is direct. Interacts with MBD1. Interacts with histones H3.1, H3.2 and H3.1t.

The protein localises to the nucleus. Its function is as follows. Acts as a component of the histone chaperone complex chromatin assembly factor 1 (CAF-1), which assembles histone octamers onto DNA during replication and repair. CAF-1 performs the first step of the nucleosome assembly process, bringing newly synthesized histones H3 and H4 to replicating DNA; histones H2A/H2B can bind to this chromatin precursor subsequent to DNA replication to complete the histone octamer. It may play a role in heterochromatin maintenance in proliferating cells by bringing newly synthesized cbx proteins to heterochromatic DNA replication foci. The chain is Chromatin assembly factor 1 subunit A (CHAF1A) from Bos taurus (Bovine).